We begin with the raw amino-acid sequence, 183 residues long: Pentapeptide repeat protein MfpA (183 aa).

The Pentapeptide repeat domain occupies 113–147 (SLVDTDLRKCVLRGADLSGARTTGARLDDADLRGA).

The protein belongs to the pentapeptide repeat protein family. Homodimer. Probably interacts with DNA gyrase.

Functionally, might be involved in fluoroquinolone resistance. Inhibits ATP-independent DNA relaxation, ATP-dependent DNA supercoiling and ATP-dependent decatenation by endogenous gyrase, 50% inhibition occurs at 2 uM; inhibition is abolished if GyrA is mutated (Asp-87 to Gly or His). Also inhibits fluoroquinolone-promoted dsDNA cleavage. Increases fluoroquinolone (ciprofloxacin or moxifloxacin) inhibition of gyrase supercoiling activity in a concentration-dependent manner. Inhibits DNA relaxation and supercoiling by E.coli gyrase. Forms a structure that exhibits size, shape and electrostatic similarity to B-form DNA; it may bind to DNA gyrase which is postulated to protect it from fluoroquinolones. In Mycobacterium tuberculosis (strain ATCC 25618 / H37Rv), this protein is Pentapeptide repeat protein MfpA.